We begin with the raw amino-acid sequence, 531 residues long: Probable rhamnogalacturonate lyase A (531 aa).

The N-terminal stretch at 1-20 is a signal peptide; that stretch reads MLSKALFFSSLPLWAKVASA. 2 disulfides stabilise this stretch: Cys50–Cys93 and Cys184–Cys193. A glycan (N-linked (GlcNAc...) asparagine) is linked at Asn351.

It belongs to the polysaccharide lyase 4 family.

It localises to the secreted. The enzyme catalyses Endotype eliminative cleavage of L-alpha-rhamnopyranosyl-(1-&gt;4)-alpha-D-galactopyranosyluronic acid bonds of rhamnogalacturonan I domains in ramified hairy regions of pectin leaving L-rhamnopyranose at the reducing end and 4-deoxy-4,5-unsaturated D-galactopyranosyluronic acid at the non-reducing end.. Pectinolytic enzymes consist of four classes of enzymes: pectin lyase, polygalacturonase, pectin methylesterase and rhamnogalacturonase. Degrades the rhamnogalacturonan I (RG-I) backbone of pectin. This Aspergillus terreus (strain NIH 2624 / FGSC A1156) protein is Probable rhamnogalacturonate lyase A (rglA).